Consider the following 121-residue polypeptide: General odorant-binding protein 72 (121 aa).

Cystine bridges form between Cys-45–Cys-101 and Cys-90–Cys-110.

Belongs to the PBP/GOBP family.

Its subcellular location is the secreted. In terms of biological role, present in the aqueous fluid surrounding olfactory sensory dendrites and are thought to aid in the capture and transport of hydrophobic odorants into and through this fluid. The polypeptide is General odorant-binding protein 72 (Obp72) (Anopheles gambiae (African malaria mosquito)).